The sequence spans 512 residues: Glycosyltransferase sdnJ (512 aa).

The signal sequence occupies residues 1–24; sequence MHAKRPSVLFFTISDFGYVNVVLA. Asn-207 is a glycosylation site (N-linked (GlcNAc...) asparagine).

The protein belongs to the UDP-glycosyltransferase family.

The enzyme catalyses sordaricin + GDP-6-deoxy-alpha-D-altrose = 4'-O-demethylsordarin + GDP + H(+). The protein operates within antibiotic biosynthesis. In terms of biological role, glycosyltransferase; part of the gene cluster that mediates the biosynthesis of sordarin and hypoxysordarin, glycoside antibiotics with a unique tetracyclic diterpene aglycone structure. First, the geranylgeranyl diphosphate synthase sdnC constructs GGDP from farnesyl diphosphate and isopentenyl diphosphate. The diterpene cyclase sdnA then catalyzes the cyclization of GGDP to afford cycloaraneosene. Cycloaraneosene is then hydroxylated four times by the putative cytochrome P450 monooxygenases sdnB, sdnE, sdnF and sdnH to give a hydroxylated cycloaraneosene derivative such as cycloaraneosene-8,9,13,19-tetraol. Although the order of the hydroxylations is unclear, at least C8, C9 and C13 of the cycloaraneosene skeleton are hydroxylated before the sordaricin formation. Dehydration of the 13-hydroxy group of the hydroxylated cycloaraneosene derivative might be catalyzed by an unassigned hypothetical protein such as sdnG and sdnP to construct the cyclopentadiene moiety. The FAD-dependent oxidoreductase sdnN is proposed to catalyze the oxidation at C9 of the hydroxylated cycloaraneosene derivative and also catalyze the Baeyer-Villiger oxidation to give the lactone intermediate. The presumed lactone intermediate would be hydrolyzed to give an acrolein moiety and a carboxylate moiety. Then, [4+2]cycloaddition would occur between the acrolein moiety and the cyclopentadiene moiety to give sordaricin. SdnN might also be involved in the [4+2]cycloaddition after the hypothesized oxidation to accommodate the oxidized product and prompt the [4+2]cycloaddition. GDP-6-deoxy-D-altrose may be biosynthesized from GDP-D-mannose by the putative GDP-mannose-4,6-dehydratase sdnI and the short-chain dehydrogenase sdnK. The glycosyltransferase sdnJ catalyzes the attachment of 6-deoxy-D-altrose onto the 19-hydroxy group of sordaricin to give 4'-O-demethylsordarin. The methyltransferase sdnD would complete the biosynthesis of sordarin. Sordarin can be further modified into hypoxysordarin. The unique acyl chain at the 3'-hydroxy group of hypoxysordarin would be constructed by an iterative type I PKS sdnO and the trans-acting polyketide methyltransferase sdnL. SdnL would be responsible for the introduction of an alpha-methyl group of the polyketide chain. Alternatively, the beta-lactamase-like protein sdnR might be responsible for the cleavage and transfer of the polyketide chain from the PKS sdnO to sordarin. Two putative cytochrome P450 monooxygenases, sdnQ and sdnT, might catalyze the epoxidations of the polyketide chain to complete the biosynthesis of hypoxysordarin. Transcriptional regulators sdnM and sdnS are presumably encoded for the transcriptional regulation of the expression of the sdn gene cluster. This is Glycosyltransferase sdnJ from Sordaria araneosa (Pleurage araneosa).